A 310-amino-acid polypeptide reads, in one-letter code: Metal ABC transporter substrate-binding lipoprotein ScbA (310 aa).

A signal peptide spans 1-19 (MKKCRFLVLLLLAFVGLAA). The N-palmitoyl cysteine moiety is linked to residue Cys-20. Residue Cys-20 is the site of S-diacylglycerol cysteine attachment. His-68, His-140, Glu-206, and Asp-281 together coordinate a divalent metal cation.

The protein belongs to the bacterial solute-binding protein 9 family.

It is found in the cell membrane. Part of an ATP-binding cassette (ABC) transport system involved in metal import. Binds a metal with high affinity and specificity and delivers it to the membrane permease for translocation into the cytoplasm. Part of an ATP-driven transport system for manganese. Does not exhibit adhesion properties. The polypeptide is Metal ABC transporter substrate-binding lipoprotein ScbA (scbA) (Streptococcus cristatus).